A 541-amino-acid polypeptide reads, in one-letter code: Protein wntless homolog (541 aa).

Residues 1 to 15 (MAGAIIENMGTKKLC) are Cytoplasmic-facing. Residues 16 to 36 (IVGGILLVFQIIAFLVGGLIA) traverse the membrane as a helical segment. Over 37 to 232 (PGPTTAVSYM…GIHQNGGFTK (196 aa)) the chain is Lumenal. The interaction with Wnt proteins stretch occupies residues 101–232 (MEMSPWFQFM…GIHQNGGFTK (132 aa)). The helical transmembrane segment at 233 to 253 (VWFAMKTFLTPSIFIIMVWYW) threads the bilayer. The Cytoplasmic segment spans residues 254-268 (RRITMMSRPPVLLEK). A helical membrane pass occupies residues 269 to 289 (VIFALGISMTFINIPVEWFSI). Residues 290 to 303 (GFDWTWMLLFGDIR) are Lumenal-facing. The helical transmembrane segment at 304 to 324 (QGIFYAMLLSFWIIFCGEHMM) threads the bilayer. The Cytoplasmic segment spans residues 325–331 (DQHERNH). The chain crosses the membrane as a helical span at residues 332–352 (IAGYWKQVGPIAVGSFCLFIF). At 353–380 (DMCERGVQLTNPFYSIWTTDIGTELAMA) the chain is on the lumenal side. The helical transmembrane segment at 381-401 (FIIVAGICLCLYFLFLCFMVF) threads the bilayer. Residues 402 to 431 (QVFRNISGKQSSLPAMSKVRRLHYEGLIFR) lie on the Cytoplasmic side of the membrane. Residues 432–452 (FKFLMLITLACAAMTVIFFIV) form a helical membrane-spanning segment. Topologically, residues 453–471 (SQVTEGHWKWGGVTVQVNS) are lumenal. A helical membrane pass occupies residues 472–492 (AFFTGIYGMWNLYVFALMFLY). The Cytoplasmic segment spans residues 493–541 (APSHKNYGEDQSNGDLGVHSGEELQLTTTITHVDGPTEIYKLTRKEAQE).

Belongs to the wntless family. As to quaternary structure, interacts with WNT3A. Interacts with WNT1, WNT3 and WNT5A.

Its subcellular location is the golgi apparatus membrane. It is found in the cytoplasmic vesicle membrane. The protein resides in the cell membrane. The protein localises to the endoplasmic reticulum membrane. It localises to the early endosome membrane. Its function is as follows. Regulates Wnt proteins sorting and secretion in a feedback regulatory mechanism. This reciprocal interaction plays a key role in the regulation of expression, subcellular location, binding and organelle-specific association of Wnt proteins. Also plays an important role in establishment of the anterior-posterior body axis formation during development. This is Protein wntless homolog (WLS) from Pongo abelii (Sumatran orangutan).